A 717-amino-acid polypeptide reads, in one-letter code: MREGAFDASRKKGGTQRPSSLSTAQPPSDSRPPSSSSPPSSSSSSSSASSSSPSHPPRPFPSASSPWFPTCEASAEKMDRAQTDSRQEPILRPVAAGEEASPAFVPWQTRAFSPIARGSLRGSVLTLASSCLGAGVLATPYAMQETGLLIGLSLLCMHTFVSFFTTYILMASSKFFGSSTYAELAHRASPRLPRRAVDAIIVLNGLGVCLSFLVFLGDFLPASLENLQLFPRATDHRAALLCASMVVIFPLSVQPRLSALRHFAFFPVCALLFSLSCVVYRSLHLLREQTAPIRLVNLNWNFFKSFNVFLFAFMQHINVCPIGRELQNPTDPRVYKVSLRAALLEYCLYTPIATLGYLSFRGVTKQNFMLNYSSEDQLMHVCTLLLSFSMVLGVPLTLIPTVDSMFSLLRSLAPAPRRAARAALGEAPRRRSLVAPLLHAERTDGLVRVTVSLAFEKEGGLGDAEYGGAEAGEATRGCGEGVESPGEVQPEQADAGARNRDRSRLHADSERSAGDREGSQAEEEREEERSGEERSVVTATQASRCEGSSSASSRSVDSGSGGCQDACESRETRTRFLALEEEPSGDREAREEREEREEREGQGRRGGELLLLMGRVLENRKVCVAACLLPVLLLALVLDKAADVVGLLGGFFSTLLMSALPSIIFYAGIGNLYYRPFTRSLLMVFLLGVTCVGAFSSVIIILQTFNVCCQVPRSVLH.

Basic and acidic residues predominate over residues 1 to 10; the sequence is MREGAFDASR. Residues 1 to 88 are disordered; sequence MREGAFDASR…DRAQTDSRQE (88 aa). The span at 16–25 shows a compositional bias: polar residues; it reads QRPSSLSTAQ. Over residues 26-53 the composition is skewed to low complexity; the sequence is PPSDSRPPSSSSPPSSSSSSSSASSSSP. The segment covering 74 to 88 has biased composition (basic and acidic residues); that stretch reads SAEKMDRAQTDSRQE. The next 8 helical transmembrane spans lie at 124–143, 149–170, 196–216, 236–253, 265–283, 303–320, 341–358, and 378–402; these read VLTLASSCLGAGVLATPYAM, LIGLSLLCMHTFVSFFTTYILM, AVDAIIVLNGLGVCLSFLVFL, HRAALLCASMVVIFPLSV, FFPVCALLFSLSCVVYRSL, FKSFNVFLFAFMQHINVC, AALLEYCLYTPIATLGYL, and LMHVCTLLLSFSMVLGVPLTLIPTV. Positions 462 to 602 are disordered; the sequence is GDAEYGGAEA…REEREEREGQ (141 aa). Positions 463-477 are enriched in low complexity; it reads DAEYGGAEAGEATRG. Residues 497 to 519 show a composition bias toward basic and acidic residues; that stretch reads ARNRDRSRLHADSERSAGDREGS. Residues 547–558 show a composition bias toward low complexity; that stretch reads GSSSASSRSVDS. The span at 584–602 shows a compositional bias: basic and acidic residues; sequence SGDREAREEREEREEREGQ. The next 3 helical transmembrane spans lie at 622–638, 644–669, and 681–702; these read VCVAACLLPVLLLALVL, VVGLLGGFFSTLLMSALPSIIFYAGI, and LLMVFLLGVTCVGAFSSVIIIL.

This sequence belongs to the amino acid/polyamine transporter 2 family.

It localises to the vacuole membrane. Functionally, putative amino acid transporter. Probably transports arginine. Involved in maintaining the osmotic homeostasis of the digestive vacuole. Required for extracellular parasite survival and bradyzoite differentiation. The sequence is that of Putative amino acid transporter AAT1 from Toxoplasma gondii (strain ATCC 50611 / Me49).